Here is a 131-residue protein sequence, read N- to C-terminus: Small ribosomal subunit protein uS9 (131 aa).

This sequence belongs to the universal ribosomal protein uS9 family.

The protein is Small ribosomal subunit protein uS9 of Actinobacillus succinogenes (strain ATCC 55618 / DSM 22257 / CCUG 43843 / 130Z).